A 328-amino-acid polypeptide reads, in one-letter code: Putative thiosulfate sulfurtransferase mpst-1 (328 aa).

Rhodanese domains lie at 22–162 (NKEG…EVST) and 202–320 (KTSE…KKIS). The active-site Cysteine persulfide intermediate is the C278.

The enzyme catalyses thiosulfate + hydrogen cyanide = thiocyanate + sulfite + 2 H(+). This Caenorhabditis elegans protein is Putative thiosulfate sulfurtransferase mpst-1 (mpst-1).